A 111-amino-acid chain; its full sequence is Nucleoid-associated protein PputW619_3586 (111 aa).

The interval 87–111 is disordered; the sequence is EQSSQEKMGGMTAGMQLPPGFKMPF.

Belongs to the YbaB/EbfC family. In terms of assembly, homodimer.

It localises to the cytoplasm. The protein resides in the nucleoid. Functionally, binds to DNA and alters its conformation. May be involved in regulation of gene expression, nucleoid organization and DNA protection. This is Nucleoid-associated protein PputW619_3586 from Pseudomonas putida (strain W619).